We begin with the raw amino-acid sequence, 215 residues long: Fibroblast growth factor 17 (215 aa).

Positions 1 to 22 are cleaved as a signal peptide; that stretch reads MYGINQRYLYISFHFFVVWCHA. An N-linked (GlcNAc...) asparagine glycan is attached at N137.

Belongs to the heparin-binding growth factors family.

Its subcellular location is the secreted. In terms of biological role, involved in dorsal-ventral embryonic patterning, by promoting expression of bone morphogenetic protein (BMP) antagonists such as chd. Also involved in anterior-posterior neural patterning and in mesoderm induction. This Danio rerio (Zebrafish) protein is Fibroblast growth factor 17 (fgf17).